A 92-amino-acid polypeptide reads, in one-letter code: Small ribosomal subunit protein uS19 (92 aa).

It belongs to the universal ribosomal protein uS19 family.

Its function is as follows. Protein S19 forms a complex with S13 that binds strongly to the 16S ribosomal RNA. This chain is Small ribosomal subunit protein uS19, found in Nitrobacter hamburgensis (strain DSM 10229 / NCIMB 13809 / X14).